Reading from the N-terminus, the 430-residue chain is Trigger factor (430 aa).

Positions 163-248 constitute a PPIase FKBP-type domain; sequence GNIAIIDFKG…IKDIKVKELP (86 aa).

This sequence belongs to the FKBP-type PPIase family. Tig subfamily.

The protein resides in the cytoplasm. The catalysed reaction is [protein]-peptidylproline (omega=180) = [protein]-peptidylproline (omega=0). In terms of biological role, involved in protein export. Acts as a chaperone by maintaining the newly synthesized protein in an open conformation. Functions as a peptidyl-prolyl cis-trans isomerase. The polypeptide is Trigger factor (Clostridium botulinum (strain Okra / Type B1)).